Here is a 309-residue protein sequence, read N- to C-terminus: Carboxylesterase Culp6 homolog (309 aa).

Residues 5–25 (ITVIAVLIVLALIGVGIVQYV) traverse the membrane as a helical segment. Cys55 and Cys146 are disulfide-bonded. Active-site residues include Ser157, Asp253, and His279. A disulfide bond links Cys249 and Cys256.

Belongs to the cutinase family.

Its subcellular location is the cell membrane. It catalyses the reaction a butanoate ester + H2O = an aliphatic alcohol + butanoate + H(+). Inhibited by tetrahydrolipstatin (THL), a specific lipase inhibitor. In terms of biological role, esterase that may be involved in cell wall biosynthesis and/or maintenance. Hydrolyzes pNP-butyrate (C4). The protein is Carboxylesterase Culp6 homolog of Corynebacterium glutamicum (strain ATCC 13032 / DSM 20300 / JCM 1318 / BCRC 11384 / CCUG 27702 / LMG 3730 / NBRC 12168 / NCIMB 10025 / NRRL B-2784 / 534).